A 392-amino-acid polypeptide reads, in one-letter code: Phospho-N-acetylmuramoyl-pentapeptide-transferase (392 aa).

Transmembrane regions (helical) follow at residues 28 to 48 (IIAA…KLIA), 76 to 96 (TMGG…FADL), 101 to 121 (VWVM…DDWL), 137 to 157 (MVLQ…TWTL), 181 to 201 (WFNP…VVGT), 213 to 233 (GLAI…CYVA), 268 to 288 (GAEL…FLWF), 295 to 315 (VFMG…LAML), 320 to 340 (VVSA…MIQV), and 369 to 389 (KIIV…LLSL).

It belongs to the glycosyltransferase 4 family. MraY subfamily. The cofactor is Mg(2+).

The protein resides in the cell inner membrane. The catalysed reaction is UDP-N-acetyl-alpha-D-muramoyl-L-alanyl-gamma-D-glutamyl-meso-2,6-diaminopimeloyl-D-alanyl-D-alanine + di-trans,octa-cis-undecaprenyl phosphate = di-trans,octa-cis-undecaprenyl diphospho-N-acetyl-alpha-D-muramoyl-L-alanyl-D-glutamyl-meso-2,6-diaminopimeloyl-D-alanyl-D-alanine + UMP. The protein operates within cell wall biogenesis; peptidoglycan biosynthesis. Its function is as follows. Catalyzes the initial step of the lipid cycle reactions in the biosynthesis of the cell wall peptidoglycan: transfers peptidoglycan precursor phospho-MurNAc-pentapeptide from UDP-MurNAc-pentapeptide onto the lipid carrier undecaprenyl phosphate, yielding undecaprenyl-pyrophosphoryl-MurNAc-pentapeptide, known as lipid I. The polypeptide is Phospho-N-acetylmuramoyl-pentapeptide-transferase (Myxococcus xanthus (strain DK1622)).